A 144-amino-acid chain; its full sequence is Na(+)/H(+) antiporter subunit B (144 aa).

A run of 4 helical transmembrane segments spans residues 9-31 (VLLH…YLFF), 41-58 (FIGG…YLGF), 75-97 (IAFG…DPYL), and 117-139 (ALPF…ILTI).

This sequence belongs to the CPA3 antiporters (TC 2.A.63) subunit B family. Forms a heterooligomeric complex that consists of seven subunits: MrpA, MrpB, MrpC, MrpD, MrpE, MrpF and MrpG.

It localises to the cell membrane. Its function is as follows. Mnh complex is a Na(+)Li(+)/H(+) antiporter involved in Na(+) and/or Li(+) excretion and Na(+) resistance. Na(+)/H(+) antiport consumes a transmembrane electrical potential, and is thus inferred to be electrogenic. Does not transport K(+), Ca(2+) or Mg(2+). The sequence is that of Na(+)/H(+) antiporter subunit B (mrpB) from Alkalihalophilus pseudofirmus (strain ATCC BAA-2126 / JCM 17055 / OF4) (Bacillus pseudofirmus).